The sequence spans 610 residues: MNRSNIWNLLFTILIIVTLFWLARFFYVENSPVSKLSYTSFVQMVEDERSVVSEVVIRDDGVLRVYTKDGRVYEVDAPWAVNDSQLIEKLVSKGIKVSGERSGSSSFWINVLGTLIPTILFIVVWLFIMRSLSGRNNQAFTFTKSRATMYKPSGNKRVTFKDVGGAEEAIEELKEVVEFLKDPSKFNRIGARMPKGILLVGPPGTGKTLLARAVAGEANVPFFHISGSDFVELFVGVGAARVRDLFAQAKAHAPCIVFIDEIDAVGRHRGAGLGGGHDEREQTLNQLLVEMDGFDSKEGIIVMAATNRPDILDPALLRPGRFDKKIVVDPPDMLGRKKILEIHTRNKPLAEDVNLEIIAKRTPGFVGADLENLVNEAALLAAREGRDKITMKDFEEAIDRVIAGPARKSKLISPKEKRIIAYHEAGHAVVSTVVPNGEPVHRISIIPRGYKALGYTLHLPEEDKYLVSRNELLDKLTALLGGRAAEEVVFGDVTSGAANDIERATEIARNMVCQLGMSEELGPLAWGKEEQEVFLGKEITRLRNYSEEVASKIDEEVKKIVTNCYERAKEIIRKYRKQLDNIVEILLEKETIEGDELRRILSEEFEKVVE.

Residues 1–5 lie on the Cytoplasmic side of the membrane; it reads MNRSN. Residues 6–26 form a helical membrane-spanning segment; it reads IWNLLFTILIIVTLFWLARFF. Residues 27 to 107 are Periplasmic-facing; it reads YVENSPVSKL…SGERSGSSSF (81 aa). A helical membrane pass occupies residues 108-128; sequence WINVLGTLIPTILFIVVWLFI. Residues 129–610 lie on the Cytoplasmic side of the membrane; sequence MRSLSGRNNQ…LSEEFEKVVE (482 aa). ATP contacts are provided by residues glycine 164, 204–208, leucine 209, histidine 343, and glutamate 371; that span reads GTGKT. Histidine 423 contacts Zn(2+). The active site involves glutamate 424. Zn(2+) is bound by residues histidine 427 and aspartate 500.

It in the central section; belongs to the AAA ATPase family. The protein in the C-terminal section; belongs to the peptidase M41 family. The isolated ADP-bound cytosolic domain forms a 6-fold symmetric protease disk and a 2-fold symmetric AAA ATPase ring. In the absence of nucleotide the AAA ATPase ring also forms symmetric hexamers. It depends on Zn(2+) as a cofactor.

Its subcellular location is the cell inner membrane. In terms of biological role, acts as a processive, ATP-dependent zinc metallopeptidase for both cytoplasmic and membrane proteins. Plays a role in the quality control of integral membrane proteins. The chain is ATP-dependent zinc metalloprotease FtsH from Thermotoga maritima (strain ATCC 43589 / DSM 3109 / JCM 10099 / NBRC 100826 / MSB8).